The chain runs to 953 residues: MEKTYNPQSIEQALYQRWEEAGYFKPHGDTSKDAYSIMIPPPNVTGSLHMGHAFQDTIMDTLIRAERMKGKNTLWQVGTDHAGIATQMVVERKIAAEEGKTKHDYGRDAFIDKIWEWKAESGGTITKQLRRLGASVDWDRERFTMDDGLSAATQEVFVRLFEEDLIYRGKRLVNWDPKLHTAISDLEVESKDKKGFMWHFRYPLADGVKTADGKDYIVVATTRPETMLGDTGVAVNPEDPRYKDLIGKQIKLPIVGRLIPIVGDEHADMDKGTGCVKITPAHDFNDYEVGKRHSLPMINILTFNADIRDAAEVFDTNGEANDAYNSELPAKYHGMERFAARKAIVAEFDELGLLEEVKDHDLTVPYGDRGGVAIEPMLTDQWYVRTAPLAAPAVKAVEDGQIQFVPKQYENMYFAWMRDVQDWCISRQLWWGHRIPAWYDNYGKVYVGRTEDEVREKNNLASVVVLRQDDDVLDTWFSSALWTFGTQGWPENTDALKTFHPSEVLVSGFDIIFFWVARMIMMTMHFVKDEEGNAQVPFKTVYMTGLIRDENGDKMSKSKGNVLDPIDMIDGIGLEELVEKRCGNMMQPKLAAKIEKQTRKAFEGGIEPYGTDALRFTLAAMASTGRDINWDMKRLEGYRNFCNKLWNASRYVLMNTEEHDCGMAEGAELEFSLADQWITSQFEVAAKEFNAHLDNYRLDMAANTLYEFIWNQFCDWYLELTKPVLWKGTEAQQRATRYTLITVLEKTLRLAHPILPYITESIWQSVKPLVDGVEGETIMTQALPQFNEDNFNADVVADLEWVKAFITSIRNLRAEYDIAPSKGLDVMIKVADEKDAARIQANEIVLTSLAKLDSIKVLAKNEETQACATSLVGKSELMIPMAGLIDKDAELARLDKEVAKTQGEIKRIEGKLNNQGFVAKAPEVVITKEREKLEGYQETLVKLEAQKETIAAL.

The 'HIGH' region signature appears at 42 to 52 (PNVTGSLHMGH). The 'KMSKS' region signature appears at 554-558 (KMSKS). Lysine 557 is a binding site for ATP. A coiled-coil region spans residues 884 to 953 (LIDKDAELAR…EAQKETIAAL (70 aa)).

The protein belongs to the class-I aminoacyl-tRNA synthetase family. ValS type 1 subfamily. As to quaternary structure, monomer.

The protein localises to the cytoplasm. It carries out the reaction tRNA(Val) + L-valine + ATP = L-valyl-tRNA(Val) + AMP + diphosphate. In terms of biological role, catalyzes the attachment of valine to tRNA(Val). As ValRS can inadvertently accommodate and process structurally similar amino acids such as threonine, to avoid such errors, it has a 'posttransfer' editing activity that hydrolyzes mischarged Thr-tRNA(Val) in a tRNA-dependent manner. This Photobacterium profundum (strain SS9) protein is Valine--tRNA ligase.